Consider the following 417-residue polypeptide: UPF0761 membrane protein CV_0810 (417 aa).

Transmembrane regions (helical) follow at residues 52–72 (LLALVPLFTIALSVISAFPVF), 79–99 (FKIMLLSTLVPEFAGKVITVY), 110–130 (LTAAGIVMLGVTALMLMSTIE), 150–170 (MVYWTVLTLGPLVLGGSLLSW), 185–205 (LLASVLEAGGTIVLTALVLAL), 214–234 (FVPFRHAVWGALVTSVLLELT), and 258–278 (IPIFLLWVYCLWLVVLAGAVF).

It belongs to the UPF0761 family.

It localises to the cell inner membrane. This is UPF0761 membrane protein CV_0810 from Chromobacterium violaceum (strain ATCC 12472 / DSM 30191 / JCM 1249 / CCUG 213 / NBRC 12614 / NCIMB 9131 / NCTC 9757 / MK).